The sequence spans 878 residues: Fanconi-associated nuclease 1 homolog (878 aa).

Residues 32–59 (GKTCPLCNIKFSLASYRSHMNVCKVADD) form a UBZ4-type zinc finger. Zn(2+)-binding residues include Cys-35, Cys-38, His-50, and Cys-54. The interval 88-180 (ENSGQEIPVN…QKSQSESQEA (93 aa)) is disordered. The segment covering 142–161 (SEVRSVEKEIKKSPVWENRR) has biased composition (basic and acidic residues). A compositionally biased stretch (low complexity) spans 168 to 179 (QNSQKSQSESQE). Glu-695, Asp-823, Glu-838, and Val-839 together coordinate Mn(2+). The VRR-NUC domain occupies 757-870 (QETIEDNIRR…GIKAEVCHVE (114 aa)).

This sequence belongs to the FAN1 family. Mn(2+) serves as cofactor. Mg(2+) is required as a cofactor.

It localises to the nucleus. The enzyme catalyses Hydrolytically removes 5'-nucleotides successively from the 3'-hydroxy termini of 3'-hydroxy-terminated oligonucleotides.. In terms of biological role, nuclease required for the repair of DNA interstrand cross-links (ICL). Acts as a 5'-3' exonuclease that anchors at a cut end of DNA and cleaves DNA successively at every third nucleotide, allowing to excise an ICL from one strand through flanking incisions. The sequence is that of Fanconi-associated nuclease 1 homolog (fan-1) from Caenorhabditis briggsae.